The following is a 742-amino-acid chain: Cullin-2 (742 aa).

The region spanning 672–734 (DRRYAIDAAL…RDYLERDTDN (63 aa)) is the Cullin neddylation domain. Lysine 686 participates in a covalent cross-link: Glycyl lysine isopeptide (Lys-Gly) (interchain with G-Cter in NEDD8).

Belongs to the cullin family. As to quaternary structure, interacts with SKIP17 and FBW2/SKIP18. Neddylated; which enhances the ubiquitination activity of E3 ubiquitin-protein ligase complexes.

Core component of multiple SCF (SKP1-CUL1-F-box protein) E3 ubiquitin-protein ligase complexes. Involved in ubiquitination and subsequent proteasomal degradation of target proteins. The sequence is that of Cullin-2 (CUL2) from Arabidopsis thaliana (Mouse-ear cress).